Here is a 253-residue protein sequence, read N- to C-terminus: Ubiquinone biosynthesis O-methyltransferase (253 aa).

Residues Arg-47, Gly-78, Asp-99, and Met-141 each coordinate S-adenosyl-L-methionine.

It belongs to the methyltransferase superfamily. UbiG/COQ3 family.

The catalysed reaction is a 3-demethylubiquinol + S-adenosyl-L-methionine = a ubiquinol + S-adenosyl-L-homocysteine + H(+). It catalyses the reaction a 3-(all-trans-polyprenyl)benzene-1,2-diol + S-adenosyl-L-methionine = a 2-methoxy-6-(all-trans-polyprenyl)phenol + S-adenosyl-L-homocysteine + H(+). It functions in the pathway cofactor biosynthesis; ubiquinone biosynthesis. Functionally, O-methyltransferase that catalyzes the 2 O-methylation steps in the ubiquinone biosynthetic pathway. In Rhodopseudomonas palustris (strain BisA53), this protein is Ubiquinone biosynthesis O-methyltransferase.